The following is a 75-amino-acid chain: Exodeoxyribonuclease 7 small subunit (75 aa).

This sequence belongs to the XseB family. In terms of assembly, heterooligomer composed of large and small subunits.

It is found in the cytoplasm. The catalysed reaction is Exonucleolytic cleavage in either 5'- to 3'- or 3'- to 5'-direction to yield nucleoside 5'-phosphates.. In terms of biological role, bidirectionally degrades single-stranded DNA into large acid-insoluble oligonucleotides, which are then degraded further into small acid-soluble oligonucleotides. The sequence is that of Exodeoxyribonuclease 7 small subunit from Elusimicrobium minutum (strain Pei191).